The following is a 259-amino-acid chain: Glutathione S-transferase domain-containing protein DDB_G0274705 (259 aa).

Residues 7-96 (KIDYIFYTNN…YLAQKFNTFL (90 aa)) form the GST N-terminal domain. The GST C-terminal domain occupies 102-232 (NPLENSEVIT…GFKNFNPSLL (131 aa)).

Belongs to the GST superfamily.

This Dictyostelium discoideum (Social amoeba) protein is Glutathione S-transferase domain-containing protein DDB_G0274705.